The chain runs to 692 residues: Ribonuclease R (692 aa).

The RNB domain occupies 204-525 (RKDLRDLLCF…IVHRLLFHPL (322 aa)). The S1 motif domain maps to 563–648 (KKFLDEQPAT…LTQAIEWTLI (86 aa)). A disordered region spans residues 651-692 (KERSSSKKKKAKAKSNATQVKKKSSSKKKKAVSKAKKNRGGK). Positions 670–692 (VKKKSSSKKKKAVSKAKKNRGGK) are enriched in basic residues.

The protein belongs to the RNR ribonuclease family. RNase R subfamily.

The protein resides in the cytoplasm. It carries out the reaction Exonucleolytic cleavage in the 3'- to 5'-direction to yield nucleoside 5'-phosphates.. In terms of biological role, 3'-5' exoribonuclease that releases 5'-nucleoside monophosphates and is involved in maturation of structured RNAs. This chain is Ribonuclease R, found in Chlamydia muridarum (strain MoPn / Nigg).